The primary structure comprises 439 residues: Methylenetetrahydrofolate--tRNA-(uracil-5-)-methyltransferase TrmFO (439 aa).

Residue 8 to 13 (GGGLAG) coordinates FAD.

Belongs to the MnmG family. TrmFO subfamily. FAD serves as cofactor.

It localises to the cytoplasm. The enzyme catalyses uridine(54) in tRNA + (6R)-5,10-methylene-5,6,7,8-tetrahydrofolate + NADH + H(+) = 5-methyluridine(54) in tRNA + (6S)-5,6,7,8-tetrahydrofolate + NAD(+). The catalysed reaction is uridine(54) in tRNA + (6R)-5,10-methylene-5,6,7,8-tetrahydrofolate + NADPH + H(+) = 5-methyluridine(54) in tRNA + (6S)-5,6,7,8-tetrahydrofolate + NADP(+). Catalyzes the folate-dependent formation of 5-methyl-uridine at position 54 (M-5-U54) in all tRNAs. The sequence is that of Methylenetetrahydrofolate--tRNA-(uracil-5-)-methyltransferase TrmFO from Dictyoglomus thermophilum (strain ATCC 35947 / DSM 3960 / H-6-12).